The sequence spans 480 residues: Flap endonuclease 1 (480 aa).

The segment at 1 to 106 (MGIKGLTKFI…SELEKRGEKR (106 aa)) is N-domain. D34 contacts Mg(2+). DNA-binding residues include R47 and R72. Residues D88, E160, E162, D181, and D183 each contribute to the Mg(2+) site. Residues 124 to 266 (EIKKQSGRTV…KTAYNLIKEY (143 aa)) are I-domain. E160 lines the DNA pocket. 2 residues coordinate DNA: G244 and D246. D246 is a Mg(2+) binding site. The tract at residues 349-357 (TQRRLDTFF) is interaction with PCNA. Residues 379 to 461 (TKGKGKKREI…NIKNENVKED (83 aa)) are disordered. The segment covering 404-428 (NVKDEKKNNEKVDELKNKSDENLVK) has biased composition (basic and acidic residues). The segment covering 429-438 (DEEDDQDDYD) has biased composition (acidic residues).

It belongs to the XPG/RAD2 endonuclease family. FEN1 subfamily. Interacts with PCNA. Three molecules of FEN1 bind to one PCNA trimer with each molecule binding to one PCNA monomer. PCNA stimulates the nuclease activity without altering cleavage specificity. It depends on Mg(2+) as a cofactor. Post-translationally, phosphorylated. Phosphorylation upon DNA damage induces relocalization to the nuclear plasma.

It is found in the nucleus. The protein localises to the nucleolus. It localises to the nucleoplasm. The protein resides in the mitochondrion. With respect to regulation, inhibited by monovalent metal ions. Structure-specific nuclease with 5'-flap endonuclease and 5'-3' exonuclease activities involved in DNA replication and repair. During DNA replication, cleaves the 5'-overhanging flap structure that is generated by displacement synthesis when DNA polymerase encounters the 5'-end of a downstream Okazaki fragment. It enters the flap from the 5'-end and then tracks to cleave the flap base, leaving a nick for ligation. Also involved in the long patch base excision repair (LP-BER) pathway, by cleaving within the apurinic/apyrimidinic (AP) site-terminated flap. Acts as a genome stabilization factor that prevents flaps from equilibrating into structures that lead to duplications and deletions. Also possesses 5'-3' exonuclease activity on nicked or gapped double-stranded DNA, and exhibits RNase H activity. Also involved in replication and repair of rDNA and in repairing mitochondrial DNA. This chain is Flap endonuclease 1, found in Plasmodium yoelii yoelii.